We begin with the raw amino-acid sequence, 411 residues long: Flavohemoprotein (411 aa).

The Globin domain maps to 5-142; it reads TLSQETKQIV…IADVFIQVEK (138 aa). Histidine 89 is a heme b binding site. Active-site charge relay system residues include tyrosine 99 and glutamate 141. Residues 153–411 are reductase; the sequence is GGWREFRSFV…FGPAGTLASS (259 aa). The region spanning 156 to 267 is the FAD-binding FR-type domain; sequence REFRSFVVEK…TAPAGDFTLQ (112 aa). FAD-binding positions include tyrosine 194 and 210–213; that span reads RQYS. An NADP(+)-binding site is contributed by 280-285; it reads GVGITP. 401–404 contributes to the FAD binding site; it reads FFGP.

This sequence belongs to the globin family. Two-domain flavohemoproteins subfamily. In the C-terminal section; belongs to the flavoprotein pyridine nucleotide cytochrome reductase family. Heme b is required as a cofactor. The cofactor is FAD.

It carries out the reaction 2 nitric oxide + NADPH + 2 O2 = 2 nitrate + NADP(+) + H(+). The catalysed reaction is 2 nitric oxide + NADH + 2 O2 = 2 nitrate + NAD(+) + H(+). In terms of biological role, is involved in NO detoxification in an aerobic process, termed nitric oxide dioxygenase (NOD) reaction that utilizes O(2) and NAD(P)H to convert NO to nitrate, which protects the bacterium from various noxious nitrogen compounds. Therefore, plays a central role in the inducible response to nitrosative stress. The polypeptide is Flavohemoprotein (Halalkalibacterium halodurans (strain ATCC BAA-125 / DSM 18197 / FERM 7344 / JCM 9153 / C-125) (Bacillus halodurans)).